The primary structure comprises 908 residues: Translation initiation factor IF-2 (908 aa).

The tract at residues 52–318 (QSHGQEEKRR…RSSQSSQHKF (267 aa)) is disordered. Positions 65 to 84 (KSKTTSTARVTGSSGKSKSV) are enriched in polar residues. Basic and acidic residues-rich tracts occupy residues 94-108 (FEKPDPEKMAEELAA), 120-138 (AAKDAEDRAATKKKSEERQ), 176-185 (IEVKPKDQPK), 193-238 (PKVE…EQMR), 270-280 (SFEKERREIKR), and 294-303 (KNQDEREIKN). Positions 409–578 (TRPPVVTIMG…SLQAELMELE (170 aa)) constitute a tr-type G domain. Positions 418–425 (GHVDHGKT) are G1. 418 to 425 (GHVDHGKT) lines the GTP pocket. The tract at residues 443–447 (GITQH) is G2. The tract at residues 464 to 467 (DTPG) is G3. GTP contacts are provided by residues 464 to 468 (DTPGH) and 518 to 521 (NKMD). The segment at 518–521 (NKMD) is G4. Positions 554–556 (SAK) are G5.

This sequence belongs to the TRAFAC class translation factor GTPase superfamily. Classic translation factor GTPase family. IF-2 subfamily.

The protein resides in the cytoplasm. In terms of biological role, one of the essential components for the initiation of protein synthesis. Protects formylmethionyl-tRNA from spontaneous hydrolysis and promotes its binding to the 30S ribosomal subunits. Also involved in the hydrolysis of GTP during the formation of the 70S ribosomal complex. This chain is Translation initiation factor IF-2, found in Psychrobacter cryohalolentis (strain ATCC BAA-1226 / DSM 17306 / VKM B-2378 / K5).